A 187-amino-acid chain; its full sequence is Nicotinamide-nucleotide adenylyltransferase (187 aa).

Belongs to the archaeal NMN adenylyltransferase family.

The protein resides in the cytoplasm. It catalyses the reaction beta-nicotinamide D-ribonucleotide + ATP + H(+) = diphosphate + NAD(+). It functions in the pathway cofactor biosynthesis; NAD(+) biosynthesis; NAD(+) from nicotinamide D-ribonucleotide: step 1/1. This chain is Nicotinamide-nucleotide adenylyltransferase, found in Thermococcus onnurineus (strain NA1).